A 121-amino-acid chain; its full sequence is Cu-Zn superoxide dismutase-like protein (121 aa).

A disulfide bridge connects residues Cys-48 and Cys-98.

Belongs to the Cu-Zn superoxide dismutase family.

The protein localises to the host cytoplasm. In terms of biological role, virion protein with no enzymatic activity. The sequence is that of Cu-Zn superoxide dismutase-like protein from Vaccinia virus (strain Ankara) (VACV).